Here is a 577-residue protein sequence, read N- to C-terminus: Cell pattern formation-associated protein stuA (577 aa).

Residues 1–41 (MNQPQPYMDQHAPAPPPASNMTQYSNYGAPQPLQPATHGYG) form a disordered region. Positions 19 to 28 (SNMTQYSNYG) are enriched in polar residues. In terms of domain architecture, HTH APSES-type spans 111–217 (RVTATLWEDE…HNIGALLYHP (107 aa)). The H-T-H motif DNA-binding region spans 145-166 (GTKLLNVAGMTRGRRDGILKSE). Disordered stretches follow at residues 228–487 (ATMA…QLPS) and 518–577 (QYPA…AVRR). Polar residues-rich tracts occupy residues 238-251 (SQEY…TQAP) and 319-333 (AVNS…SQGM). A compositionally biased stretch (low complexity) spans 334–350 (PQYQTSQPPYTQSYSTP). Positions 351–364 (GSYSQPQYTHQQPG) are enriched in polar residues. Residues 390 to 399 (AENDHPDHKV) show a composition bias toward basic and acidic residues. Low complexity predominate over residues 465–479 (TPRTTNPYTGYNNTP). The interval 526-552 (KRGREDDDQVDPYGRPSSALGEHKRQR) is nuclear localization domain.

It belongs to the EFG1/PHD1/stuA family.

The protein resides in the nucleus. In terms of biological role, transcription factor that regulates asexual reproduction. Binds the StuA-response elements (StRE) with the consensus sequence 5'-(A/T)CGCG(T/A)N(A/C)-3' at the promoters of target genes. This Dothistroma septosporum (strain NZE10 / CBS 128990) (Red band needle blight fungus) protein is Cell pattern formation-associated protein stuA.